A 691-amino-acid polypeptide reads, in one-letter code: Elongation factor G (691 aa).

The region spanning 8–282 (ERVRNIGIAA…AVVDYLPAPV (275 aa)) is the tr-type G domain. GTP contacts are provided by residues 17-24 (AHIDAGKT), 81-85 (DTPGH), and 135-138 (NKMD).

This sequence belongs to the TRAFAC class translation factor GTPase superfamily. Classic translation factor GTPase family. EF-G/EF-2 subfamily.

The protein resides in the cytoplasm. Its function is as follows. Catalyzes the GTP-dependent ribosomal translocation step during translation elongation. During this step, the ribosome changes from the pre-translocational (PRE) to the post-translocational (POST) state as the newly formed A-site-bound peptidyl-tRNA and P-site-bound deacylated tRNA move to the P and E sites, respectively. Catalyzes the coordinated movement of the two tRNA molecules, the mRNA and conformational changes in the ribosome. The chain is Elongation factor G from Prochlorococcus marinus (strain MIT 9313).